The chain runs to 352 residues: 4-hydroxy-3-methylbut-2-en-1-yl diphosphate synthase (flavodoxin) (352 aa).

Cys262, Cys265, Cys297, and Glu304 together coordinate [4Fe-4S] cluster.

It belongs to the IspG family. It depends on [4Fe-4S] cluster as a cofactor.

The catalysed reaction is (2E)-4-hydroxy-3-methylbut-2-enyl diphosphate + oxidized [flavodoxin] + H2O + 2 H(+) = 2-C-methyl-D-erythritol 2,4-cyclic diphosphate + reduced [flavodoxin]. Its pathway is isoprenoid biosynthesis; isopentenyl diphosphate biosynthesis via DXP pathway; isopentenyl diphosphate from 1-deoxy-D-xylulose 5-phosphate: step 5/6. Its function is as follows. Converts 2C-methyl-D-erythritol 2,4-cyclodiphosphate (ME-2,4cPP) into 1-hydroxy-2-methyl-2-(E)-butenyl 4-diphosphate. The chain is 4-hydroxy-3-methylbut-2-en-1-yl diphosphate synthase (flavodoxin) from Nitratiruptor sp. (strain SB155-2).